The sequence spans 89 residues: Small ribosomal subunit protein uS14 (89 aa).

This sequence belongs to the universal ribosomal protein uS14 family. In terms of assembly, part of the 30S ribosomal subunit. Contacts proteins S3 and S10.

Functionally, binds 16S rRNA, required for the assembly of 30S particles and may also be responsible for determining the conformation of the 16S rRNA at the A site. This Flavobacterium johnsoniae (strain ATCC 17061 / DSM 2064 / JCM 8514 / BCRC 14874 / CCUG 350202 / NBRC 14942 / NCIMB 11054 / UW101) (Cytophaga johnsonae) protein is Small ribosomal subunit protein uS14.